The sequence spans 77 residues: uncharacterized protein (77 aa).

Basic and acidic residues-rich tracts occupy residues 1–24 and 37–58; these read CPVA…EDQR and EGPK…ERGP. The segment at 1-77 is disordered; it reads CPVAEEHFLV…RHGPKRKPAK (77 aa). Positions 66 to 77 are enriched in basic residues; that stretch reads RPRHGPKRKPAK.

This is an uncharacterized protein from Macaca fascicularis (Crab-eating macaque).